A 359-amino-acid chain; its full sequence is DNA-directed RNA polymerase subunit alpha (359 aa).

The alpha N-terminal domain (alpha-NTD) stretch occupies residues 1-226 (MLISQRPSLA…ELFGLARELN (226 aa)). The segment at 241 to 359 (ADTIAAYAMP…GQDYAETEQL (119 aa)) is alpha C-terminal domain (alpha-CTD). The segment at 315–359 (FDPSAAAAEYPSEGWASETETVGGLGRVEDNGYDDGQDYAETEQL) is disordered. The segment covering 345–359 (NGYDDGQDYAETEQL) has biased composition (acidic residues).

The protein belongs to the RNA polymerase alpha chain family. Homodimer. The RNAP catalytic core consists of 2 alpha, 1 beta, 1 beta' and 1 omega subunit. When a sigma factor is associated with the core the holoenzyme is formed, which can initiate transcription.

It carries out the reaction RNA(n) + a ribonucleoside 5'-triphosphate = RNA(n+1) + diphosphate. DNA-dependent RNA polymerase catalyzes the transcription of DNA into RNA using the four ribonucleoside triphosphates as substrates. This chain is DNA-directed RNA polymerase subunit alpha, found in Saccharopolyspora erythraea (strain ATCC 11635 / DSM 40517 / JCM 4748 / NBRC 13426 / NCIMB 8594 / NRRL 2338).